Reading from the N-terminus, the 128-residue chain is Large ribosomal subunit protein bL12 (128 aa).

The protein belongs to the bacterial ribosomal protein bL12 family. Homodimer. Part of the ribosomal stalk of the 50S ribosomal subunit. Forms a multimeric L10(L12)X complex, where L10 forms an elongated spine to which 2 to 4 L12 dimers bind in a sequential fashion. Binds GTP-bound translation factors.

Functionally, forms part of the ribosomal stalk which helps the ribosome interact with GTP-bound translation factors. Is thus essential for accurate translation. The chain is Large ribosomal subunit protein bL12 from Acidithiobacillus ferrooxidans (strain ATCC 23270 / DSM 14882 / CIP 104768 / NCIMB 8455) (Ferrobacillus ferrooxidans (strain ATCC 23270)).